We begin with the raw amino-acid sequence, 464 residues long: Soluble pyridine nucleotide transhydrogenase (464 aa).

35–44 (EDKSQVGGNC) serves as a coordination point for FAD.

The protein belongs to the class-I pyridine nucleotide-disulfide oxidoreductase family. Requires FAD as cofactor.

The protein localises to the cytoplasm. It carries out the reaction NAD(+) + NADPH = NADH + NADP(+). Conversion of NADPH, generated by peripheral catabolic pathways, to NADH, which can enter the respiratory chain for energy generation. This Hahella chejuensis (strain KCTC 2396) protein is Soluble pyridine nucleotide transhydrogenase.